Consider the following 86-residue polypeptide: Muscarinic toxin MTX6 (86 aa).

Residues 1-21 form the signal peptide; sequence MKTLLLTLVVVTILCLDLGYT. Cystine bridges form between cysteine 24/cysteine 45, cysteine 38/cysteine 63, cysteine 67/cysteine 78, and cysteine 79/cysteine 84.

This sequence belongs to the three-finger toxin family. Short-chain subfamily. Aminergic toxin sub-subfamily. In terms of assembly, monomer. In terms of tissue distribution, expressed by the venom gland.

It localises to the secreted. Functionally, binds to the muscarinic acetylcholine receptor (CHRM). The chain is Muscarinic toxin MTX6 from Ophiophagus hannah (King cobra).